Consider the following 195-residue polypeptide: UPF0215 protein TSIB_1161 (195 aa).

The protein belongs to the UPF0215 family.

This Thermococcus sibiricus (strain DSM 12597 / MM 739) protein is UPF0215 protein TSIB_1161.